A 315-amino-acid chain; its full sequence is MTTYDPSQKSLGKEKLSRIPVKIEATHTPLRKPDWIRIRLSTDSKVSQLKKLLRENHLVTVCEEASCPNLNECFGHGTATFMIMGDKCTRRCSFCDVGHGRPDPLDPEEPVNLANTVSIMSLRYVVITSVDRDDLRDGGAQHYAQCINAVREKNPGIKVEVLVPDFRGRMEKALDQLAQGLPDVFNHNIETAPRLYKQARPGADYPWSLALLQTFKKRFPGIPTKSGMMLGLGETREEVEMVMRDLRQHEVDRLTLGQYLQPTRYHMPVDRYVTPQEFQELGELAKKLGFSNVASGPLVRSSYHADLQAQGERVS.

[4Fe-4S] cluster-binding residues include Cys62, Cys67, Cys73, Cys88, Cys92, Cys95, and Ser302. A Radical SAM core domain is found at 73-291 (CFGHGTATFM…GELAKKLGFS (219 aa)).

It belongs to the radical SAM superfamily. Lipoyl synthase family. [4Fe-4S] cluster serves as cofactor.

It is found in the cytoplasm. The catalysed reaction is [[Fe-S] cluster scaffold protein carrying a second [4Fe-4S](2+) cluster] + N(6)-octanoyl-L-lysyl-[protein] + 2 oxidized [2Fe-2S]-[ferredoxin] + 2 S-adenosyl-L-methionine + 4 H(+) = [[Fe-S] cluster scaffold protein] + N(6)-[(R)-dihydrolipoyl]-L-lysyl-[protein] + 4 Fe(3+) + 2 hydrogen sulfide + 2 5'-deoxyadenosine + 2 L-methionine + 2 reduced [2Fe-2S]-[ferredoxin]. It participates in protein modification; protein lipoylation via endogenous pathway; protein N(6)-(lipoyl)lysine from octanoyl-[acyl-carrier-protein]: step 2/2. Its function is as follows. Catalyzes the radical-mediated insertion of two sulfur atoms into the C-6 and C-8 positions of the octanoyl moiety bound to the lipoyl domains of lipoate-dependent enzymes, thereby converting the octanoylated domains into lipoylated derivatives. This Coxiella burnetii (strain CbuG_Q212) (Coxiella burnetii (strain Q212)) protein is Lipoyl synthase.